The sequence spans 180 residues: Probable Brix domain-containing ribosomal biogenesis protein (180 aa).

Positions 1–178 constitute a Brix domain; that stretch reads MTTSRRPSPR…KPAEMVKRGR (178 aa).

Functionally, probably involved in the biogenesis of the ribosome. This is Probable Brix domain-containing ribosomal biogenesis protein from Aeropyrum pernix (strain ATCC 700893 / DSM 11879 / JCM 9820 / NBRC 100138 / K1).